Reading from the N-terminus, the 156-residue chain is MPRRGSVARREVLPDPIYNSKVVTKLANQIMLDGKKSTAEAILYGALDVIKEKTNKNPMEVLEAALKNVMPLLEVKARRVGGANYQVPVEVRPERRQTLGLRWLVKYSRERSGKTMIDKLAGEIMDAANNTGGAVKKKEDTHKMAEANKAFAHYRW.

It belongs to the universal ribosomal protein uS7 family. In terms of assembly, part of the 30S ribosomal subunit. Contacts proteins S9 and S11.

One of the primary rRNA binding proteins, it binds directly to 16S rRNA where it nucleates assembly of the head domain of the 30S subunit. Is located at the subunit interface close to the decoding center, probably blocks exit of the E-site tRNA. This Heliobacterium modesticaldum (strain ATCC 51547 / Ice1) protein is Small ribosomal subunit protein uS7.